A 429-amino-acid chain; its full sequence is Protein phosphatase 2C homolog 2 (429 aa).

Residues 16-291 (LYGLSAMQGW…DNMTMIIIGL (276 aa)) enclose the PPM-type phosphatase domain. Mn(2+) contacts are provided by Asp-64, Gly-65, Asp-233, and Asp-282. 2 disordered regions span residues 320-348 (YGKSEFRGPGIRNQFEETPDNYDLENDRS) and 384-429 (RDVT…SASS). Positions 384 to 397 (RDVTNHLQHDKAEE) are enriched in basic and acidic residues. The segment covering 405–419 (SESPSSANKNSSGSG) has biased composition (low complexity).

Belongs to the PP2C family. The cofactor is Mg(2+). Mn(2+) serves as cofactor.

Its subcellular location is the cytoplasm. It localises to the nucleus. The catalysed reaction is O-phospho-L-seryl-[protein] + H2O = L-seryl-[protein] + phosphate. It catalyses the reaction O-phospho-L-threonyl-[protein] + H2O = L-threonyl-[protein] + phosphate. In terms of biological role, dephosphorylating regulator for many key proteins. Dephosphorylates sakA, to negatively regulate the stress-activated p38MAPK cascade. The chain is Protein phosphatase 2C homolog 2 from Aspergillus fumigatus (strain ATCC MYA-4609 / CBS 101355 / FGSC A1100 / Af293) (Neosartorya fumigata).